The chain runs to 197 residues: Casparian strip membrane protein 3 (197 aa).

At 1–35 (MSARVDIPADTSAAAKGTAPLIAASTHVKGGYKKG) the chain is on the cytoplasmic side. The chain crosses the membrane as a helical span at residues 36 to 56 (LAIFDLVLRLGAVVTALAAAA). Residues 57-85 (TMGTTDQTLPFFTQFFQFQASYDDLPTFQ) are Extracellular-facing. The helical transmembrane segment at 86-106 (FFVIAMAIVSGYLVLSLPFSI) threads the bilayer. Residues 107-119 (VAIIRPHATGPRL) lie on the Cytoplasmic side of the membrane. Residues 120–140 (LLIILDTVALTLNTAAAAAAV) form a helical membrane-spanning segment. Residues 141-171 (AIVDLAQNGNSSANWLGICQQFGDFCQKASG) lie on the Extracellular side of the membrane. Residue asparagine 150 is glycosylated (N-linked (GlcNAc...) asparagine). Residues 172 to 192 (AVVASFIAAGVLLFLIVISAL) traverse the membrane as a helical segment. Topologically, residues 193-197 (ALRKR) are cytoplasmic.

Belongs to the Casparian strip membrane proteins (CASP) family. As to quaternary structure, homodimer and heterodimers.

It localises to the cell membrane. In terms of biological role, regulates membrane-cell wall junctions and localized cell wall deposition. Required for establishment of the Casparian strip membrane domain (CSD) and the subsequent formation of Casparian strips, a cell wall modification of the root endodermis that determines an apoplastic barrier between the intraorganismal apoplasm and the extraorganismal apoplasm and prevents lateral diffusion. The chain is Casparian strip membrane protein 3 from Populus trichocarpa (Western balsam poplar).